The sequence spans 286 residues: Acetylglutamate kinase (286 aa).

Residues glycine 63–glycine 64, arginine 85, and asparagine 178 contribute to the substrate site.

The protein belongs to the acetylglutamate kinase family. ArgB subfamily.

It localises to the cytoplasm. It catalyses the reaction N-acetyl-L-glutamate + ATP = N-acetyl-L-glutamyl 5-phosphate + ADP. It participates in amino-acid biosynthesis; L-arginine biosynthesis; N(2)-acetyl-L-ornithine from L-glutamate: step 2/4. In terms of biological role, catalyzes the ATP-dependent phosphorylation of N-acetyl-L-glutamate. This Clostridioides difficile (strain 630) (Peptoclostridium difficile) protein is Acetylglutamate kinase.